The chain runs to 341 residues: L-threonine 3-dehydrogenase (341 aa).

A Zn(2+)-binding site is contributed by Cys38. Active-site charge relay system residues include Thr40 and His43. Zn(2+)-binding residues include His63, Glu64, Cys93, Cys96, Cys99, and Cys107. NAD(+) is bound by residues Ile175, Asp195, Arg200, 262 to 264 (LGI), and 286 to 287 (IY).

It belongs to the zinc-containing alcohol dehydrogenase family. As to quaternary structure, homotetramer. Zn(2+) is required as a cofactor.

The protein resides in the cytoplasm. The enzyme catalyses L-threonine + NAD(+) = (2S)-2-amino-3-oxobutanoate + NADH + H(+). Its pathway is amino-acid degradation; L-threonine degradation via oxydo-reductase pathway; glycine from L-threonine: step 1/2. In terms of biological role, catalyzes the NAD(+)-dependent oxidation of L-threonine to 2-amino-3-ketobutyrate. In Pseudoalteromonas translucida (strain TAC 125), this protein is L-threonine 3-dehydrogenase.